We begin with the raw amino-acid sequence, 306 residues long: Homeobox protein HMX3 (306 aa).

A disordered region spans residues 95–181; the sequence is HTPRTEVPDK…DKKPCRKKKT (87 aa). Basic and acidic residues-rich tracts occupy residues 117–143 and 153–174; these read GERDSPDPIHPLKTELGAKESESKSPE and EEGKKDDSGEDWKKREDSPDKK. The segment at residues 178–237 is a DNA-binding region (homeobox); sequence KKKTRTVFSRSQVFQLESTFDMKRYLSSSERAGLAASLHLTETQVKIWFQNRRNKWKRQL.

It belongs to the HMX homeobox family.

It localises to the nucleus. Its function is as follows. Transcription factor involved in specification of neuronal cell types and which is required for inner ear and hypothalamus development. Binds to the 5'-CAAGTG-3' core sequence. May act as a stage-specific inhibitor of anf1 in the anterior neural plate during the development. This Xenopus laevis (African clawed frog) protein is Homeobox protein HMX3 (hmx3).